The chain runs to 263 residues: Small ribosomal subunit protein bS1c (263 aa).

S1 motif domains follow at residues 27 to 96, 114 to 178, and 192 to 260; these read GDIV…LSIR, DSLL…LSHR, and GNII…LSMK.

It belongs to the bacterial ribosomal protein bS1 family.

It localises to the plastid. It is found in the chloroplast. This Pyropia yezoensis (Susabi-nori) protein is Small ribosomal subunit protein bS1c (rps1).